The following is a 91-amino-acid chain: Small ribosomal subunit protein bS18 (91 aa).

This sequence belongs to the bacterial ribosomal protein bS18 family. As to quaternary structure, part of the 30S ribosomal subunit. Forms a tight heterodimer with protein bS6.

Functionally, binds as a heterodimer with protein bS6 to the central domain of the 16S rRNA, where it helps stabilize the platform of the 30S subunit. The chain is Small ribosomal subunit protein bS18 from Burkholderia lata (strain ATCC 17760 / DSM 23089 / LMG 22485 / NCIMB 9086 / R18194 / 383).